A 247-amino-acid polypeptide reads, in one-letter code: uncharacterized protein (247 aa).

A signal peptide spans 1-35 (MWGPGVTAEGLSVAPAPPPLLPLLLLLALALVAPS). A glycan (N-linked (GlcNAc...) asparagine) is linked at Asn57. A helical membrane pass occupies residues 82-102 (LSGLLILLVLFAIGYFLQRII). Residues 109 to 179 (YPRGQARPGQ…GGRSDPSCAS (71 aa)) form a disordered region. Gly residues predominate over residues 160 to 172 (SGGGGRGRGGGGR).

The protein localises to the membrane. This is an uncharacterized protein from Homo sapiens (Human).